The chain runs to 152 residues: MRCPKCTSIEDKVIDSRISKEGSTIRRRRECLECGYRFSTTESLVRDGIVVIKRDGRREEFSRDKLLHAVRAACHKRPVDVEQITMLIEDVIDMLEAHYDSEIPSAAIGDAVMQRLRSMDQVAYVRFASVYKEFRDVSEFMQEISALGKKEK.

Residues 3–34 fold into a zinc finger; the sequence is CPKCTSIEDKVIDSRISKEGSTIRRRRECLEC. The region spanning 49–139 is the ATP-cone domain; it reads IVVIKRDGRR…VYKEFRDVSE (91 aa).

This sequence belongs to the NrdR family. Requires Zn(2+) as cofactor.

Its function is as follows. Negatively regulates transcription of bacterial ribonucleotide reductase nrd genes and operons by binding to NrdR-boxes. This chain is Transcriptional repressor NrdR, found in Opitutus terrae (strain DSM 11246 / JCM 15787 / PB90-1).